The chain runs to 537 residues: Quadr-hydrophobin (537 aa).

Positions 1–17 (MKFITVAAALFASTSLA) are cleaved as a signal peptide. Hydrophobin stretches follow at residues 63-199 (GGNP…QNPI), 200-299 (GGNP…ENPT), 300-421 (GGNP…QDPL), and 422-537 (GGNP…RAII). N-linked (GlcNAc...) asparagine glycosylation is found at Asn-70 and Asn-113. 16 cysteine pairs are disulfide-bonded: Cys-134/Cys-183, Cys-144/Cys-174, Cys-145/Cys-157, Cys-184/Cys-195, Cys-234/Cys-283, Cys-244/Cys-274, Cys-245/Cys-257, Cys-284/Cys-295, Cys-356/Cys-405, Cys-366/Cys-396, Cys-367/Cys-379, Cys-406/Cys-417, Cys-471/Cys-520, Cys-481/Cys-511, Cys-482/Cys-494, and Cys-521/Cys-532.

This sequence belongs to the cerato-ulmin hydrophobin family. As to quaternary structure, homotetramer. Further self-assembles to form highly ordered films at water-air interfaces through intermolecular interactions.

The protein resides in the secreted. It is found in the cell wall. In terms of biological role, aerial growth, conidiation, and dispersal of filamentous fungi in the environment rely upon a capability of their secreting small amphipathic proteins called hydrophobins (HPBs) with low sequence identity. Class I can self-assemble into an outermost layer of rodlet bundles on aerial cell surfaces, conferring cellular hydrophobicity that supports fungal growth, development and dispersal; whereas Class II form highly ordered films at water-air interfaces through intermolecular interactions but contribute nothing to the rodlet structure. This chain is Quadr-hydrophobin, found in Cordyceps militaris (Caterpillar fungus).